Reading from the N-terminus, the 126-residue chain is Large ribosomal subunit protein uL22 (126 aa).

This sequence belongs to the universal ribosomal protein uL22 family. As to quaternary structure, part of the 50S ribosomal subunit.

This protein binds specifically to 23S rRNA; its binding is stimulated by other ribosomal proteins, e.g. L4, L17, and L20. It is important during the early stages of 50S assembly. It makes multiple contacts with different domains of the 23S rRNA in the assembled 50S subunit and ribosome. Its function is as follows. The globular domain of the protein is located near the polypeptide exit tunnel on the outside of the subunit, while an extended beta-hairpin is found that lines the wall of the exit tunnel in the center of the 70S ribosome. This is Large ribosomal subunit protein uL22 from Ruegeria sp. (strain TM1040) (Silicibacter sp.).